The following is a 112-amino-acid chain: Nucleoid-associated protein FTM_1023 (112 aa).

This sequence belongs to the YbaB/EbfC family. As to quaternary structure, homodimer.

It is found in the cytoplasm. The protein localises to the nucleoid. In terms of biological role, binds to DNA and alters its conformation. May be involved in regulation of gene expression, nucleoid organization and DNA protection. This is Nucleoid-associated protein FTM_1023 from Francisella tularensis subsp. mediasiatica (strain FSC147).